The sequence spans 169 residues: Ureidoglycolate lyase (169 aa).

Belongs to the ureidoglycolate lyase family. In terms of assembly, homodimer. Ni(2+) is required as a cofactor.

The enzyme catalyses (S)-ureidoglycolate = urea + glyoxylate. Its pathway is nitrogen metabolism; (S)-allantoin degradation. In terms of biological role, catalyzes the catabolism of the allantoin degradation intermediate (S)-ureidoglycolate, generating urea and glyoxylate. Involved in the utilization of allantoin as nitrogen source. In Brucella abortus biovar 1 (strain 9-941), this protein is Ureidoglycolate lyase.